A 546-amino-acid chain; its full sequence is Chaperonin GroEL (546 aa).

ATP is bound by residues 29–32 (TLGP), 86–90 (DGTTT), Gly-413, 476–478 (NAA), and Asp-492. A disordered region spans residues 521-546 (RPDESGNDAGAGAQGMDPSMMGGGMM).

The protein belongs to the chaperonin (HSP60) family. As to quaternary structure, forms a cylinder of 14 subunits composed of two heptameric rings stacked back-to-back. Interacts with the co-chaperonin GroES.

The protein localises to the cytoplasm. The enzyme catalyses ATP + H2O + a folded polypeptide = ADP + phosphate + an unfolded polypeptide.. Its function is as follows. Together with its co-chaperonin GroES, plays an essential role in assisting protein folding. The GroEL-GroES system forms a nano-cage that allows encapsulation of the non-native substrate proteins and provides a physical environment optimized to promote and accelerate protein folding. The protein is Chaperonin GroEL of Tetragenococcus halophilus (Pediococcus halophilus).